The sequence spans 812 residues: Valine--tRNA ligase (812 aa).

The 'HIGH' region signature appears at 46 to 56 (PTVSGQLHIGH). Positions 536 to 540 (KMSKS) match the 'KMSKS' region motif. Lys-539 provides a ligand contact to ATP.

This sequence belongs to the class-I aminoacyl-tRNA synthetase family. ValS type 2 subfamily. Monomer.

It is found in the cytoplasm. It catalyses the reaction tRNA(Val) + L-valine + ATP = L-valyl-tRNA(Val) + AMP + diphosphate. Its function is as follows. Catalyzes the attachment of valine to tRNA(Val). As ValRS can inadvertently accommodate and process structurally similar amino acids such as threonine, to avoid such errors, it has a 'posttransfer' editing activity that hydrolyzes mischarged Thr-tRNA(Val) in a tRNA-dependent manner. The sequence is that of Valine--tRNA ligase from Rickettsia conorii (strain ATCC VR-613 / Malish 7).